A 148-amino-acid polypeptide reads, in one-letter code: Macrodomain Ter protein (148 aa).

Belongs to the MatP family. As to quaternary structure, homodimer.

It localises to the cytoplasm. Functionally, required for spatial organization of the terminus region of the chromosome (Ter macrodomain) during the cell cycle. Prevents early segregation of duplicated Ter macrodomains during cell division. Binds specifically to matS, which is a 13 bp signature motif repeated within the Ter macrodomain. The polypeptide is Macrodomain Ter protein (Aliivibrio salmonicida (strain LFI1238) (Vibrio salmonicida (strain LFI1238))).